A 201-amino-acid polypeptide reads, in one-letter code: 3-isopropylmalate dehydratase small subunit (201 aa).

This sequence belongs to the LeuD family. LeuD type 1 subfamily. In terms of assembly, heterodimer of LeuC and LeuD.

It carries out the reaction (2R,3S)-3-isopropylmalate = (2S)-2-isopropylmalate. It functions in the pathway amino-acid biosynthesis; L-leucine biosynthesis; L-leucine from 3-methyl-2-oxobutanoate: step 2/4. Its function is as follows. Catalyzes the isomerization between 2-isopropylmalate and 3-isopropylmalate, via the formation of 2-isopropylmaleate. This Roseobacter denitrificans (strain ATCC 33942 / OCh 114) (Erythrobacter sp. (strain OCh 114)) protein is 3-isopropylmalate dehydratase small subunit.